The sequence spans 208 residues: Small ribosomal subunit protein eS8 (208 aa).

The interval 1-27 is disordered; it reads MGISRDNWHKRRRTGGKRKPVHKKRKY. The segment covering 8 to 26 has biased composition (basic residues); it reads WHKRRRTGGKRKPVHKKRK.

This sequence belongs to the eukaryotic ribosomal protein eS8 family. As to quaternary structure, component of the small ribosomal subunit. Identified in a IGF2BP1-dependent mRNP granule complex containing untranslated mRNAs. Part of the small subunit (SSU) processome, composed of more than 70 proteins and the RNA chaperone small nucleolar RNA (snoRNA) U3.

The protein localises to the cytoplasm. Its subcellular location is the membrane. It is found in the nucleus. It localises to the nucleolus. Its function is as follows. Component of the small ribosomal subunit. The ribosome is a large ribonucleoprotein complex responsible for the synthesis of proteins in the cell. Part of the small subunit (SSU) processome, first precursor of the small eukaryotic ribosomal subunit. During the assembly of the SSU processome in the nucleolus, many ribosome biogenesis factors, an RNA chaperone and ribosomal proteins associate with the nascent pre-rRNA and work in concert to generate RNA folding, modifications, rearrangements and cleavage as well as targeted degradation of pre-ribosomal RNA by the RNA exosome. The protein is Small ribosomal subunit protein eS8 (rps8) of Danio rerio (Zebrafish).